Here is a 338-residue protein sequence, read N- to C-terminus: MKRLALALKQKKVASWKLEEVKELTELIKNSNTILIGSLEGFPADKLHEIRKKLRGKAIIKVTKNTLFKIAAKNAGINIEKLEQYLTGPNVFIFTKDNPFLTNMFFENYKLRRYAMPGDKAEEEVIIPAGDTGMPAGPILSVFGKLKVQTKVQDGKVHVVKDTVVAKPGDVIPTEALPILQKLGIMPVYVKLKIKVAYHEGLVIPAENLKLNLEGYRSNIAEAYRNAFTLAVEIAYPVPDVLKFTINKIFKNAITLASEIGYLTPESAQAVISKAVAKAYALATAISGKVDLGVKLPSAQQTQTQQSTAEEKKEEKKEEEKKGPSEEEIGSGLASLFG.

Positions 297 to 338 (PSAQQTQTQQSTAEEKKEEKKEEEKKGPSEEEIGSGLASLFG) are disordered. Residues 298–308 (SAQQTQTQQST) show a composition bias toward low complexity. The span at 309–325 (AEEKKEEKKEEEKKGPS) shows a compositional bias: basic and acidic residues.

The protein belongs to the universal ribosomal protein uL10 family. As to quaternary structure, part of the 50S ribosomal subunit. Forms part of the ribosomal stalk which helps the ribosome interact with GTP-bound translation factors. Forms a heptameric L10(L12)2(L12)2(L12)2 complex, where L10 forms an elongated spine to which the L12 dimers bind in a sequential fashion.

Its function is as follows. Forms part of the ribosomal stalk, playing a central role in the interaction of the ribosome with GTP-bound translation factors. This Saccharolobus islandicus (strain M.14.25 / Kamchatka #1) (Sulfolobus islandicus) protein is Large ribosomal subunit protein uL10.